We begin with the raw amino-acid sequence, 329 residues long: Serpentine receptor class alpha-7 (329 aa).

The next 7 helical transmembrane spans lie at 25–45, 57–77, 104–124, 143–163, 187–207, 237–257, and 273–293; these read YVYLSLISLTFIFSYFAVKIV, ILLFHNLVSANLHQLLYLFSA, YLKVLVTGISGMIYGQTGLLL, VGIAISIAILFLSLITGKIII, RLFASIYTFISSFNLVFSVLL, TICFLTFVQFIFMFIYSFGIF, and FIVVWFYTIPFIAALFPILLV.

Belongs to the nematode receptor-like protein sra family.

The protein localises to the membrane. The chain is Serpentine receptor class alpha-7 (sra-7) from Caenorhabditis elegans.